The chain runs to 548 residues: Glucan endo-1,3-beta-glucosidase (548 aa).

The segment at residues 1-36 (MPHDRKNSSRRAWAALCAAVLAVSGALVGVAAPASA) is a signal peptide (tat-type signal). Residues 38 to 396 (PATIPLTITN…PQAAYIKLDP (359 aa)) form the GH64 domain. Catalysis depends on E153, which acts as the Proton donor. Catalysis depends on D169, which acts as the Proton acceptor. The 127-residue stretch at 422 to 548 (GTGALRIGST…NQTEAQRWTL (127 aa)) folds into the Ricin B-type lectin domain.

The protein belongs to the glycosyl hydrolase 64 family. Post-translationally, predicted to be exported by the Tat system. The position of the signal peptide cleavage has not been experimentally proven.

The protein localises to the periplasm. The catalysed reaction is Hydrolysis of (1-&gt;3)-beta-D-glucosidic linkages in (1-&gt;3)-beta-D-glucans.. In terms of biological role, lysis of cellular walls containing beta-1,3-glucans. Implicated in the defense against fungal pathogens. The sequence is that of Glucan endo-1,3-beta-glucosidase (glcI) from Arthrobacter sp. (strain YCWD3).